The chain runs to 542 residues: Calcium-dependent protein kinase 7 (542 aa).

Glycine 2 carries the N-myristoyl glycine lipid modification. The region spanning 79-337 (YIIGRKLGQG…AHEVLRHPWI (259 aa)) is the Protein kinase domain. ATP-binding positions include 85 to 93 (LGQGQFGTT) and lysine 108. Aspartate 203 serves as the catalytic Proton acceptor. The interval 343 to 373 (ATDQALDPSVISRLKQFSAMNKLKKLALRVI) is autoinhibitory domain. The EF-hand 1 domain maps to 380 to 415 (EEIAGLREMFKAVDTKNRGVITFGELREGLRRFGAE). The Ca(2+) site is built by aspartate 393, glutamate 404, aspartate 431, asparagine 433, threonine 435, glutamate 440, aspartate 465, aspartate 467, serine 469, tyrosine 471, lysine 476, aspartate 499, asparagine 501, aspartate 503, glutamine 505, and glutamate 510. Residues 416–451 (FKDTEIGDIMEAAHNDNNVTIHYEEFIAATLPLNKI) enclose the EF-hand 2; degenerate domain. 2 EF-hand domains span residues 452-487 (EREEHLLAAFTYFDKDGSGYITVDKLQRACGEHNME) and 488-521 (DSLLEEIISEVDQNNDGQIDYAEFVAMMQGSNVG).

The protein belongs to the protein kinase superfamily. Ser/Thr protein kinase family. CDPK subfamily. In terms of tissue distribution, expressed in roots. Expressed in leaf sheaths.

The protein localises to the membrane. It is found in the cytoplasm. Its subcellular location is the cytosol. It carries out the reaction L-seryl-[protein] + ATP = O-phospho-L-seryl-[protein] + ADP + H(+). The enzyme catalyses L-threonyl-[protein] + ATP = O-phospho-L-threonyl-[protein] + ADP + H(+). Activated by calcium. Autophosphorylation may play an important role in the regulation of the kinase activity. Its function is as follows. May play a role in signal transduction pathways that involve calcium as a second messenger. May be a signaling component in the response to gibberellin and cold stress. This chain is Calcium-dependent protein kinase 7, found in Oryza sativa subsp. japonica (Rice).